Reading from the N-terminus, the 101-residue chain is uncharacterized protein (101 aa).

The N-terminal stretch at 1–24 (MILMFRMNKGMSFITLLFSLALFS) is a signal peptide.

This is an uncharacterized protein from Haemophilus influenzae (strain ATCC 51907 / DSM 11121 / KW20 / Rd).